A 643-amino-acid chain; its full sequence is Extracellular metalloproteinase 4 (643 aa).

The N-terminal stretch at 1–18 (MHGLLLAGLLALPLNVLA) is a signal peptide. A propeptide spanning residues 19–254 (HPTESHSSGI…VHSVVDYVSA (236 aa)) is cleaved from the precursor. The segment covering 47-57 (TKSDAVPKQDD) has biased composition (basic and acidic residues). Positions 47–71 (TKSDAVPKQDDESFTTSSTGDDNVS) are disordered. Residues 60-71 (FTTSSTGDDNVS) show a composition bias toward polar residues. N-linked (GlcNAc...) asparagine glycans are attached at residues Asn271 and Asn420. Position 437 (His437) interacts with Zn(2+). Glu438 is an active-site residue. His441 serves as a coordination point for Zn(2+). N-linked (GlcNAc...) asparagine glycans are attached at residues Asn510 and Asn553.

It belongs to the peptidase M36 family. Requires Zn(2+) as cofactor.

Its subcellular location is the secreted. Secreted metalloproteinase probably acting as a virulence factor. The polypeptide is Extracellular metalloproteinase 4 (MEP4) (Arthroderma benhamiae (Trichophyton mentagrophytes)).